A 312-amino-acid polypeptide reads, in one-letter code: Pyridoxal kinase (312 aa).

Methionine 1 is modified (N-acetylmethionine). Pyridoxal 5'-phosphate is bound by residues serine 12 and threonine 47. 2 residues coordinate pyridoxamine: serine 12 and threonine 47. Serine 59 is modified (phosphoserine). Aspartate 113 contributes to the K(+) binding site. Tyrosine 127 provides a ligand contact to pyridoxal 5'-phosphate. Threonine 148 lines the K(+) pocket. Asparagine 150 is an ADP binding site. Asparagine 150 is a binding site for ATP. Phosphoserine is present on serine 164. Threonine 186 is a binding site for K(+). 186–187 (TS) is an ADP binding site. Position 186-187 (186-187 (TS)) interacts with ATP. Position 213 is a phosphoserine (serine 213). Residues 223–226 (MHKV) and 233–234 (TG) contribute to the ADP site. Residues 223 to 226 (MHKV) and 233 to 234 (TG) each bind ATP. Pyridoxal 5'-phosphate is bound at residue 232–235 (GTGD). Aspartate 235 is a pyridoxamine binding site. The active-site Proton acceptor is the aspartate 235. The residue at position 285 (serine 285) is a Phosphoserine.

The protein belongs to the pyridoxine kinase family. As to quaternary structure, homodimer. Zn(2+) is required as a cofactor. Mg(2+) serves as cofactor. In terms of tissue distribution, ubiquitous.

It localises to the cytoplasm. It is found in the cytosol. The enzyme catalyses pyridoxal + ATP = pyridoxal 5'-phosphate + ADP + H(+). It catalyses the reaction pyridoxamine + ATP = pyridoxamine 5'-phosphate + ADP + H(+). The catalysed reaction is pyridoxine + ATP = pyridoxine 5'-phosphate + ADP + H(+). The protein operates within cofactor metabolism; pyridoxal 5'-phosphate salvage; pyridoxal 5'-phosphate from pyridoxal: step 1/1. Its pathway is cofactor metabolism; pyridoxal 5'-phosphate salvage; pyridoxine 5'-phosphate from pyridoxine: step 1/1. It functions in the pathway cofactor metabolism; pyridoxal 5'-phosphate salvage; pyridoxamine 5'-phosphate from pyridoxamine: step 1/1. Its activity is regulated as follows. Activated by K(+). Activity is increased in the presence of Na(+). Functionally, catalyzes the phosphorylation of the dietary vitamin B6 vitamers pyridoxal (PL), pyridoxine (PN) and pyridoxamine (PM) to form pyridoxal 5'-phosphate (PLP), pyridoxine 5'-phosphate (PNP) and pyridoxamine 5'-phosphate (PMP), respectively. PLP is the active form of vitamin B6, and acts as a cofactor for over 140 different enzymatic reactions. This chain is Pyridoxal kinase (PDXK), found in Ovis aries (Sheep).